The following is a 113-amino-acid chain: Hydrogenase maturation factor HypA 1 (113 aa).

A Ni(2+)-binding site is contributed by His-2. Zn(2+)-binding residues include Cys-73, Cys-76, Cys-89, and Cys-92.

The protein belongs to the HypA/HybF family.

Its function is as follows. Involved in the maturation of [NiFe] hydrogenases. Required for nickel insertion into the metal center of the hydrogenase. In Bradyrhizobium diazoefficiens (strain JCM 10833 / BCRC 13528 / IAM 13628 / NBRC 14792 / USDA 110), this protein is Hydrogenase maturation factor HypA 1.